The following is a 547-amino-acid chain: uncharacterized protein (547 aa).

Residues 1–37 (MSAASSAIPKRSDPRLLDQKKSAKSTLPKNTPENGVS) are disordered. Basic and acidic residues predominate over residues 10 to 21 (KRSDPRLLDQKK). Residues 24–37 (KSTLPKNTPENGVS) are compositionally biased toward polar residues. C3H1-type zinc fingers lie at residues 41–67 (NLQHVPCKFFRNGTCTAGENCPFSHSL) and 68–95 (ETERPICKYFLKGNCKFGPKCALSHALP). Residues 132–176 (SPSLSSKTMKNPADKANNTTATDVRGNTATSPYFPFSRSPGRHSG) form a disordered region. The segment covering 147-162 (ANNTTATDVRGNTATS) has biased composition (polar residues). A Phosphoserine modification is found at Ser343. Tyr344 is modified (phosphotyrosine). 6 positions are modified to phosphoserine: Ser353, Ser355, Ser483, Ser489, Ser495, and Ser499. At Thr502 the chain carries Phosphothreonine. Polar residues predominate over residues 526 to 536 (VANSSPPWNST). Positions 526-547 (VANSSPPWNSTVEEETPFQMDD) are disordered. The span at 537-547 (VEEETPFQMDD) shows a compositional bias: acidic residues.

This is an uncharacterized protein from Schizosaccharomyces pombe (strain 972 / ATCC 24843) (Fission yeast).